Consider the following 179-residue polypeptide: MAKLHDYYRDQVVNELKTKFNYSSVMQVPRIEKITLNMGVGEALTDKKLLDNAVADLTAISGQKPLITKARKSVAGFKIRQGYPIGCKVTLRGERMWEFFERLITIAVPRIRDFRGLSAKSFDGRGNYSMGVREQIIFPEIDYDKVDRVRGLDITITTTAKSDEEGQALLAVFNFPFRK.

This sequence belongs to the universal ribosomal protein uL5 family. Part of the 50S ribosomal subunit; part of the 5S rRNA/L5/L18/L25 subcomplex. Contacts the 5S rRNA and the P site tRNA. Forms a bridge to the 30S subunit in the 70S ribosome.

In terms of biological role, this is one of the proteins that bind and probably mediate the attachment of the 5S RNA into the large ribosomal subunit, where it forms part of the central protuberance. In the 70S ribosome it contacts protein S13 of the 30S subunit (bridge B1b), connecting the 2 subunits; this bridge is implicated in subunit movement. Contacts the P site tRNA; the 5S rRNA and some of its associated proteins might help stabilize positioning of ribosome-bound tRNAs. The sequence is that of Large ribosomal subunit protein uL5 from Haemophilus ducreyi (strain 35000HP / ATCC 700724).